The following is a 702-amino-acid chain: MPVKSTKTKGGSTQGGSQAGGPSTLKVNKARVPAKGKKDDDDATEAGEHGGEEWMQTKSLIKPDDQLELNDQELKEEFTRILTANNPHAPQNIVRYSFKDCSFKQTSHVDQLAIHFSLDGNMIHKDSDEARRQQQRHGASEAISEQAISEAGEEKKEEDGEQKTEEPKEGEKRDEESTPAPAEAKSDQKLTNQFNFSERASQTYNNPYRERGTQTEPPPRANFSSTANQWEIYDAYMEDLEKQEKAKEKKAAPSKKDDDKSKKKLTALETQSDDMSRISHAAKIIERMVNQNTFDDVSQDFKYYEDMSDEFRDQEGTLLPLWKFSYDKSKRLAVTSVCWNPKYKDLFAVAHGSYDFMKQSRGMILFYTLKNPSFPEFVYPTDSGVMCIDIRPEHPYLICVGYCDGSVGVFNVTSTDANPVFQSTAKTGKHTDPVWQVAWQKDDLDNNLNFFSVSSDGRVVAWTLVKNELTYTDVIQLQLDSAPQDGPEGTQLTPLGCGTCFDFHKQTDYLFLVGTEEGKIHKCSKAYSSQFLDTFEAHHMAVYKVMWNHFHPKIFISCSADWSVKIWDHTYRNGPMFTFDLGSAVGDVAWAPYSSTVFAAVTADGKVHVFDLNLNKYEPICEQAVVQKKKTKLTHITFNPNFPIVLVGDDRGYVSSLKLSPNLRKVPKDKKGAALNHGPEAEIAKMDKLLALVREPPKDNKS.

Positions 1–11 (MPVKSTKTKGG) are enriched in low complexity. 3 disordered regions span residues 1–64 (MPVK…IKPD), 128–226 (DEAR…FSST), and 243–272 (QEKAKEKKAAPSKKDDDKSKKKLTALETQS). Basic and acidic residues-rich tracts occupy residues 36–52 (GKKDDDDATEAGEHGGE) and 152–176 (GEEKKEEDGEQKTEEPKEGEKRDEE). Positions 189–206 (KLTNQFNFSERASQTYNN) are enriched in polar residues. The span at 243 to 261 (QEKAKEKKAAPSKKDDDKS) shows a compositional bias: basic and acidic residues. 6 WD repeats span residues 380 to 420 (PTDS…ANPV), 429 to 472 (KHTD…LTYT), 490 to 533 (TQLT…QFLD), 537 to 577 (AHHM…GPMF), 580 to 620 (DLGS…YEPI), and 628 to 667 (KKKTKLTHITFNPNFPIVLVGDDRGYVSSLKLSPNLRKVP).

This sequence belongs to the dynein intermediate chain family. As to quaternary structure, consists of at least two heavy chains (alpha and beta), three intermediate chains and several light chains.

It is found in the cytoplasm. The protein localises to the cytoskeleton. The protein resides in the cilium axoneme. Its function is as follows. Microtubule-binding protein that may be involved in dynein outer arm assembly on the axoneme. In Heliocidaris crassispina (Sea urchin), this protein is Dynein intermediate chain 2, ciliary.